The chain runs to 521 residues: Glutamate--cysteine ligase (521 aa).

This sequence belongs to the glutamate--cysteine ligase type 1 family. Type 1 subfamily.

The enzyme catalyses L-cysteine + L-glutamate + ATP = gamma-L-glutamyl-L-cysteine + ADP + phosphate + H(+). Its pathway is sulfur metabolism; glutathione biosynthesis; glutathione from L-cysteine and L-glutamate: step 1/2. This Aliivibrio fischeri (strain MJ11) (Vibrio fischeri) protein is Glutamate--cysteine ligase.